The primary structure comprises 600 residues: MDKSKIRNFSIIAHIDHGKSTLADRILELTNTVEKREMQDQLLDSMDIERERGITIKLNSVQLKYHSKDDKDYIFNLIDTPGHVDFTYEVSRSLAACEGAILVVDASQGVEAQTLANVYLAIDSNLEIIPVINKIDLPSADVDKVKQEIEEIIGLDCSNAPLISAKTGLNVQDVLQAIVDKIPPPSDAIDNAPLKALIFDSYYDKYLGVVMSIRLKQGMLKVGDKIKLMSTNAEYEVTSLGIKTPKIVKKDFLEAGEVGWVAASIKTIKDVNVGDTITSVLNPAKEPLDGYKKLKPMVYCGIYPIDTNKYQDFKEALEKIELSDSSLVYEPETSQALGFGFRCGFLGLLHMEVIQERLEREYNLELIATAPSVVYKVHLTNKQVIELDNPALLPEAQKISKIEEPFVEIKIATPSEYIGDLMNLCQNKLGIYKNMEVIDNNRRILIYQMPLAEIIFDFFNKLKSISKGYASFEYELIGYKESKLVRMDIKLNGEMVDAFSMIVNQKFAYQRGSALTLKLKELIPRQNFEVPVQATIGNKVISRETIKAYRKDVTWKLHAADKSRRKKLLEKQKEGKKKMKEIGTVEVPQEAFVAILKIDD.

The 183-residue stretch at Ser4–Ser186 folds into the tr-type G domain. Residues Asp16–Thr21 and Asn133–Asp136 contribute to the GTP site.

It belongs to the TRAFAC class translation factor GTPase superfamily. Classic translation factor GTPase family. LepA subfamily.

The protein resides in the cell membrane. The catalysed reaction is GTP + H2O = GDP + phosphate + H(+). Functionally, required for accurate and efficient protein synthesis under certain stress conditions. May act as a fidelity factor of the translation reaction, by catalyzing a one-codon backward translocation of tRNAs on improperly translocated ribosomes. Back-translocation proceeds from a post-translocation (POST) complex to a pre-translocation (PRE) complex, thus giving elongation factor G a second chance to translocate the tRNAs correctly. Binds to ribosomes in a GTP-dependent manner. This chain is Elongation factor 4, found in Mycoplasma capricolum subsp. capricolum (strain California kid / ATCC 27343 / NCTC 10154).